Here is a 284-residue protein sequence, read N- to C-terminus: 4-diphosphocytidyl-2-C-methyl-D-erythritol kinase (284 aa).

Lys14 is an active-site residue. Pro98–Ser108 contributes to the ATP binding site. The active site involves Asp140.

It belongs to the GHMP kinase family. IspE subfamily.

The enzyme catalyses 4-CDP-2-C-methyl-D-erythritol + ATP = 4-CDP-2-C-methyl-D-erythritol 2-phosphate + ADP + H(+). It functions in the pathway isoprenoid biosynthesis; isopentenyl diphosphate biosynthesis via DXP pathway; isopentenyl diphosphate from 1-deoxy-D-xylulose 5-phosphate: step 3/6. Functionally, catalyzes the phosphorylation of the position 2 hydroxy group of 4-diphosphocytidyl-2C-methyl-D-erythritol. The polypeptide is 4-diphosphocytidyl-2-C-methyl-D-erythritol kinase (Shewanella woodyi (strain ATCC 51908 / MS32)).